Reading from the N-terminus, the 160-residue chain is Major strawberry allergen Fra a 1-E (160 aa).

This sequence belongs to the BetVI family. As to quaternary structure, monomer. Interacts with AP. As to expression, highly expressed in roots. Expressed in open flowers. Expressed at low levels in leaves, flower buds and fruits.

Its function is as follows. Involved in the control of flavonoid biosynthesis in fruits, probably by binding directly to natural flavonoids. Binds the natural flavonoid quercetin-3-O-glucuronide with affinities in the low micromolar range. The protein is Major strawberry allergen Fra a 1-E of Fragaria ananassa (Strawberry).